The sequence spans 241 residues: Ribulose-phosphate 3-epimerase 2 (241 aa).

Ser21 contacts substrate. 3 residues coordinate a divalent metal cation: His46, Asp48, and His79. Asp48 acts as the Proton acceptor in catalysis. Residues His79, 155-158, 192-194, and 214-215 each bind substrate; these read GFGG, DGG, and GS. Asp192 is an a divalent metal cation binding site. Asp192 serves as the catalytic Proton donor.

It belongs to the ribulose-phosphate 3-epimerase family. The cofactor is a divalent metal cation.

The enzyme catalyses D-ribulose 5-phosphate = D-xylulose 5-phosphate. The protein operates within carbohydrate degradation. In terms of biological role, catalyzes the reversible epimerization of D-ribulose 5-phosphate to D-xylulose 5-phosphate. In Cupriavidus necator (strain ATCC 17699 / DSM 428 / KCTC 22496 / NCIMB 10442 / H16 / Stanier 337) (Ralstonia eutropha), this protein is Ribulose-phosphate 3-epimerase 2.